A 104-amino-acid polypeptide reads, in one-letter code: Seminal ribonuclease (104 aa).

Disulfide bonds link Cys-12/Cys-70, Cys-26/Cys-81, Cys-44/Cys-96, and Cys-51/Cys-58. Residues 27 to 31 (KPVNT), Lys-52, and Arg-71 each bind substrate.

The protein belongs to the pancreatic ribonuclease family. Homodimer; disulfide-linked.

The protein localises to the secreted. The catalysed reaction is an [RNA] containing cytidine + H2O = an [RNA]-3'-cytidine-3'-phosphate + a 5'-hydroxy-ribonucleotide-3'-[RNA].. It catalyses the reaction an [RNA] containing uridine + H2O = an [RNA]-3'-uridine-3'-phosphate + a 5'-hydroxy-ribonucleotide-3'-[RNA].. This is Seminal ribonuclease (SRN) from Saiga tatarica (Saiga antelope).